A 293-amino-acid polypeptide reads, in one-letter code: Kynurenine formamidase (293 aa).

The HGGXW motif lies at 84–88; sequence HGGYW. Ser-153 functions as the Nucleophile in the catalytic mechanism. Catalysis depends on residues Asp-236 and His-268.

The protein belongs to the kynurenine formamidase family. In terms of assembly, homodimer.

The protein localises to the cytoplasm. It is found in the cytosol. The protein resides in the nucleus. The enzyme catalyses N-formyl-L-kynurenine + H2O = L-kynurenine + formate + H(+). It functions in the pathway amino-acid degradation; L-tryptophan degradation via kynurenine pathway; L-kynurenine from L-tryptophan: step 2/2. Catalyzes the hydrolysis of N-formyl-L-kynurenine to L-kynurenine, the second step in the kynurenine pathway of tryptophan degradation. Kynurenine may be further oxidized to nicotinic acid, NAD(H) and NADP(H). Required for elimination of toxic metabolites. This chain is Kynurenine formamidase (afmid), found in Danio rerio (Zebrafish).